Here is a 1259-residue protein sequence, read N- to C-terminus: Trafficking protein particle complex subunit 10 (1259 aa).

Residue Ser708 is modified to Phosphoserine. Residues 1189–1222 form a disordered region; it reads LSVDKHGDDQPDSSSLKSRGSVHSACSSEHKGLP.

It belongs to the TRAPPC10 family. Specific component of the multisubunit TRAPP II complex, which includes at least TRAPPC1, TRAPPC2, TRAPPC3, TRAPPC4, TRAPPC5, TRAPPC6A/B, TRAPPC9, TRAPPC10 and TRAPPC14. TRAPPC9, TRAPPC10 and TRAPPC14 are specific subunits of the TRAPP II complex. Interacts with TRAPPC14. As to expression, expressed in all tissues examined.

Its subcellular location is the golgi apparatus. The protein resides in the cis-Golgi network. Its function is as follows. Specific subunit of the TRAPP (transport protein particle) II complex, a highly conserved vesicle tethering complex that functions in late Golgi trafficking as a membrane tether. The polypeptide is Trafficking protein particle complex subunit 10 (TRAPPC10) (Homo sapiens (Human)).